The following is a 43-amino-acid chain: Large ribosomal subunit protein bL32 (43 aa).

It belongs to the bacterial ribosomal protein bL32 family.

The chain is Large ribosomal subunit protein bL32 (rpmF) from Carsonella ruddii (strain PV).